A 148-amino-acid polypeptide reads, in one-letter code: uncharacterized protein (148 aa).

The segment at 122 to 148 (HNWRKRMGTRRGRHEQSPTSRPRKGPD) is disordered. The segment covering 123 to 134 (NWRKRMGTRRGR) has biased composition (basic residues).

This is an uncharacterized protein from Homo sapiens (Human).